A 308-amino-acid chain; its full sequence is Acetaldehyde dehydrogenase 1 (308 aa).

10–13 (SGNI) is a binding site for NAD(+). C128 acts as the Acyl-thioester intermediate in catalysis. Residues 159–167 (SAGPGTRAN) and N285 each bind NAD(+).

The protein belongs to the acetaldehyde dehydrogenase family.

The catalysed reaction is acetaldehyde + NAD(+) + CoA = acetyl-CoA + NADH + H(+). In Salinispora arenicola (strain CNS-205), this protein is Acetaldehyde dehydrogenase 1.